Here is a 425-residue protein sequence, read N- to C-terminus: Serine--tRNA ligase (425 aa).

Residue 233–235 (TAE) coordinates L-serine. 264–266 (RRE) is a binding site for ATP. Residue E287 coordinates L-serine. 351-354 (EISS) serves as a coordination point for ATP. S387 serves as a coordination point for L-serine.

It belongs to the class-II aminoacyl-tRNA synthetase family. Type-1 seryl-tRNA synthetase subfamily. As to quaternary structure, homodimer. The tRNA molecule binds across the dimer.

It localises to the cytoplasm. It carries out the reaction tRNA(Ser) + L-serine + ATP = L-seryl-tRNA(Ser) + AMP + diphosphate + H(+). The enzyme catalyses tRNA(Sec) + L-serine + ATP = L-seryl-tRNA(Sec) + AMP + diphosphate + H(+). The protein operates within aminoacyl-tRNA biosynthesis; selenocysteinyl-tRNA(Sec) biosynthesis; L-seryl-tRNA(Sec) from L-serine and tRNA(Sec): step 1/1. Its function is as follows. Catalyzes the attachment of serine to tRNA(Ser). Is also able to aminoacylate tRNA(Sec) with serine, to form the misacylated tRNA L-seryl-tRNA(Sec), which will be further converted into selenocysteinyl-tRNA(Sec). The sequence is that of Serine--tRNA ligase from Thermotoga maritima (strain ATCC 43589 / DSM 3109 / JCM 10099 / NBRC 100826 / MSB8).